The primary structure comprises 139 residues: Large ribosomal subunit protein uL16 (139 aa).

This sequence belongs to the universal ribosomal protein uL16 family. As to quaternary structure, part of the 50S ribosomal subunit.

Its function is as follows. Binds 23S rRNA and is also seen to make contacts with the A and possibly P site tRNAs. In Synechocystis sp. (strain ATCC 27184 / PCC 6803 / Kazusa), this protein is Large ribosomal subunit protein uL16.